The primary structure comprises 450 residues: Phosphoglucosamine mutase (450 aa).

Serine 107 functions as the Phosphoserine intermediate in the catalytic mechanism. Serine 107, aspartate 246, aspartate 248, and aspartate 250 together coordinate Mg(2+). Position 107 is a phosphoserine (serine 107).

Belongs to the phosphohexose mutase family. Mg(2+) is required as a cofactor. In terms of processing, activated by phosphorylation.

The catalysed reaction is alpha-D-glucosamine 1-phosphate = D-glucosamine 6-phosphate. In terms of biological role, catalyzes the conversion of glucosamine-6-phosphate to glucosamine-1-phosphate. The protein is Phosphoglucosamine mutase of Aromatoleum aromaticum (strain DSM 19018 / LMG 30748 / EbN1) (Azoarcus sp. (strain EbN1)).